The primary structure comprises 142 residues: uncharacterized protein (142 aa).

This is an uncharacterized protein from Caenorhabditis elegans.